Consider the following 729-residue polypeptide: Polyribonucleotide nucleotidyltransferase (729 aa).

Residues 399 to 419 (YMHNYNFPPYSTGETGRVGSP) are disordered. Positions 509 and 515 each coordinate Mg(2+). In terms of domain architecture, KH spans 575-634 (PRVISVKIPVDKIGEVIGPKGKMINQIQADSGAEITVEDDGTIYIGAADGPAAETARSAI). The 73-residue stretch at 646–718 (GERYLGTIVK…ARGKISLAPG (73 aa)) folds into the S1 motif domain.

Belongs to the polyribonucleotide nucleotidyltransferase family. Mg(2+) is required as a cofactor.

The protein localises to the cytoplasm. The catalysed reaction is RNA(n+1) + phosphate = RNA(n) + a ribonucleoside 5'-diphosphate. Its function is as follows. Involved in mRNA degradation. Catalyzes the phosphorolysis of single-stranded polyribonucleotides processively in the 3'- to 5'-direction. This Parafrankia sp. (strain EAN1pec) protein is Polyribonucleotide nucleotidyltransferase.